Here is a 666-residue protein sequence, read N- to C-terminus: Hybrid PKS-NRPS synthetase pytA (666 aa).

Residues 1–340 (MDPQQRLLLE…GTNAHAILEE (340 aa)) enclose the Ketosynthase family 3 (KS3) domain. Catalysis depends on for beta-ketoacyl synthase activity residues cysteine 87, histidine 222, and histidine 260. The tract at residues 455-665 (VFTGQGAQWF…VFVHSLVIKR (211 aa)) is malonyl-CoA:ACP transacylase (MAT) domain. Serine 548 functions as the For malonyltransferase activity in the catalytic mechanism.

The protein in the C-terminal section; belongs to the NRP synthetase family.

It participates in secondary metabolite biosynthesis. Its function is as follows. Hybrid PKS-NRPS synthetase; part of the gene cluster that mediates the biosynthesis of pyranterreones, a family of antioxidative compounds. The first step of pyranonigrins biosynthesis is performed by the hybrid PKS-NRPS synthetase pytA that condenses 4 malonyl-CoA units ato the acetyl starter unit by the modular PKS of pytA. The acyl chain is then connected to an L-serine through the amide bond by the modular NRPS of pytA. A tetramic acid is formed and released from the PKS-NRPS pytA to give pyranterreone 5 with the help of the thioesterase pytI. Pyranterreone 5 could be methylated by pytC to afford pyranterreone 6. Both pyranterreones 5 and 6 are subsequently oxidized by the FAD-linked oxidoreductase pytB and the cytochrome P450 monooxygenase pytD to form the fused gamma-pyrone core, resulting in pyranterreones 7 and 11, respectively. The hydroxy group at C-8 of pyranterreones 7 and 11 are dehydrated by the aspartyl protease pytH to form a delta-7 double bond to give pyranterreones 3 and 1, 2 accordingly. The exo-methylene of pyranterreone 3 could be reduced into a pendant methyl by reductase pytE to provide pyranterreone 4, also known as cordylactam. Pyranterreone 4 can be reconverted to pyranterreone 3 through pytB-catalyzed dehydrogenation or further oxidized to pyranterreones 9 and 10. This Aspergillus terreus (strain NIH 2624 / FGSC A1156) protein is Hybrid PKS-NRPS synthetase pytA.